The following is a 697-amino-acid chain: Putative ATP-dependent RNA helicase an3 (697 aa).

Positions 27-189 (ESGVAGTKGR…PLAPNDRVEQ (163 aa)) are disordered. Composition is skewed to basic and acidic residues over residues 89–111 (GRSDRGFYDRENSGWNSGRDKDA), 135–144 (RRTDDRRQDG), and 151–170 (RSDKSGFGRFDRGNSRWSDD). The Q motif signature appears at 221–249 (ESFHDVTMGEIIMGNIQLTRYTRPTPVQK). ATP-binding positions include 241 to 248 (YTRPTPVQ) and 265 to 272 (AQTGSGKT). In terms of domain architecture, Helicase ATP-binding spans 252 to 444 (IPIIIEKRDL…RDFLDEYIFL (193 aa)). The short motif at 388-391 (DEAD) is the DEAD box element. The Helicase C-terminal domain maps to 455 to 616 (NITQKVVWVE…EVPSWLENMA (162 aa)). The tract at residues 619 to 666 (QHHKSSSRGRSKSRFSGGFGAKDYRQSSGAGSSFGSSRGGRSSGHGGS) is disordered. Positions 622-631 (KSSSRGRSKS) are enriched in basic residues. Positions 645-654 (SSGAGSSFGS) are enriched in low complexity. The span at 655-666 (SRGGRSSGHGGS) shows a compositional bias: gly residues.

Belongs to the DEAD box helicase family. DDX3/DED1 subfamily.

The protein resides in the cell membrane. It is found in the nucleus. It localises to the cytoplasm. Its subcellular location is the stress granule. The protein localises to the inflammasome. The protein resides in the cell projection. It is found in the lamellipodium. It catalyses the reaction ATP + H2O = ADP + phosphate + H(+). Multifunctional ATP-dependent RNA helicase. The ATPase activity can be stimulated by various ribo-and deoxynucleic acids indicative for a relaxed substrate specificity. In vitro can unwind partially double-stranded DNA with a preference for 5'-single-stranded DNA overhangs. Involved in many cellular processes, which do not necessarily require its ATPase/helicase catalytic activities. Involved in the regulation of transcription and translation initiation. Involved in innate immunity. Involved in both stress and inflammatory responses. May negatively regulate extrinsic apoptotic signaling pathway via death domain receptors. May be involved in mitotic chromosome segregation. Required for canonical Wnt signaling involved in anteroposterior neural patterning. The polypeptide is Putative ATP-dependent RNA helicase an3 (an3) (Xenopus laevis (African clawed frog)).